A 255-amino-acid polypeptide reads, in one-letter code: Ras-like protein family member 12 (255 aa).

GTP is bound by residues 30 to 37 (GAMGSGKS), 77 to 81 (DTADQ), and 137 to 140 (NKVD).

This sequence belongs to the small GTPase superfamily. Ras family.

The enzyme catalyses GTP + H2O = GDP + phosphate + H(+). The sequence is that of Ras-like protein family member 12 (RASL12) from Danio rerio (Zebrafish).